Reading from the N-terminus, the 278-residue chain is NAD-capped RNA hydrolase NudC (278 aa).

Arg84 lines the substrate pocket. 2 residues coordinate Zn(2+): Cys114 and Cys117. Position 127 (Glu127) interacts with substrate. Cys132 is a binding site for Zn(2+). Residue Tyr140 coordinates substrate. The Nudix hydrolase domain occupies 141–264 (PRISPSMIVL…SIARYLIEAY (124 aa)). A divalent metal cation-binding residues include Ala174, Glu190, and Glu194. The Nudix box motif lies at 175 to 196 (GFVEPGESAEDCVHREVMEEVQ). Residue 208 to 215 (QCWPFPHS) participates in substrate binding. An a divalent metal cation-binding site is contributed by Glu235. Residue Ala257 participates in substrate binding.

Belongs to the Nudix hydrolase family. NudC subfamily. Homodimer. The cofactor is Mg(2+). Requires Mn(2+) as cofactor. Zn(2+) serves as cofactor.

The catalysed reaction is a 5'-end NAD(+)-phospho-ribonucleoside in mRNA + H2O = a 5'-end phospho-adenosine-phospho-ribonucleoside in mRNA + beta-nicotinamide D-ribonucleotide + 2 H(+). The enzyme catalyses NAD(+) + H2O = beta-nicotinamide D-ribonucleotide + AMP + 2 H(+). It carries out the reaction NADH + H2O = reduced beta-nicotinamide D-ribonucleotide + AMP + 2 H(+). Its function is as follows. mRNA decapping enzyme that specifically removes the nicotinamide adenine dinucleotide (NAD) cap from a subset of mRNAs by hydrolyzing the diphosphate linkage to produce nicotinamide mononucleotide (NMN) and 5' monophosphate mRNA. The NAD-cap is present at the 5'-end of some mRNAs and stabilizes RNA against 5'-processing. Has preference for mRNAs with a 5'-end purine. Catalyzes the hydrolysis of a broad range of dinucleotide pyrophosphates. The protein is NAD-capped RNA hydrolase NudC of Pseudomonas syringae pv. tomato (strain ATCC BAA-871 / DC3000).